Reading from the N-terminus, the 235-residue chain is Segregation and condensation protein A (235 aa).

It belongs to the ScpA family. In terms of assembly, component of a cohesin-like complex composed of ScpA, ScpB and the Smc homodimer, in which ScpA and ScpB bind to the head domain of Smc. The presence of the three proteins is required for the association of the complex with DNA.

The protein resides in the cytoplasm. In terms of biological role, participates in chromosomal partition during cell division. May act via the formation of a condensin-like complex containing Smc and ScpB that pull DNA away from mid-cell into both cell halves. This Streptococcus uberis (strain ATCC BAA-854 / 0140J) protein is Segregation and condensation protein A.